A 3957-amino-acid chain; its full sequence is Ankyrin-2 (3957 aa).

The segment covering Met-1–Glu-14 has biased composition (basic and acidic residues). The tract at residues Met-1–Ser-34 is disordered. ANK repeat units follow at residues Asp-30–Gln-62, Asn-63–Ser-92, Lys-96–Ala-125, Asn-129–Thr-158, Asp-162–Val-191, Leu-193–Val-220, Ser-232–Phe-261, Asn-265–Ala-294, Asp-298–Ala-327, Asn-331–Asp-360, Asp-364–Ala-393, Asn-397–Ala-426, Ser-430–Val-459, Arg-463–Ala-492, Glu-496–Ala-525, Asn-529–Leu-558, Lys-562–Ser-591, Asn-595–Ala-624, Asn-628–Ile-657, Gln-661–Met-690, Ser-694–Ala-723, Leu-727–Ala-756, Asn-760–Ala-789, and Asn-793–Thr-822. Ser-31 and Ser-34 each carry phosphoserine. Tyr-378 carries the phosphotyrosine modification. Tyr-531 is subject to Phosphotyrosine. A Phosphoserine modification is found at Ser-846. The residue at position 853 (Thr-853) is a Phosphothreonine. Ser-874 bears the Phosphoserine mark. Residues Ser-966 to Asp-1125 are interaction with SPTBN1. ZU5 domains are found at residues Phe-968–Arg-1156 and Lys-1158–Cys-1304. Positions Val-1289–Glu-1423 are UPA domain. Tyr-1382 bears the Phosphotyrosine mark. One can recognise a Death 1 domain in the interval Ile-1450 to Lys-1535. The segment at Lys-1457–Val-1486 is disordered. Phosphoserine is present on residues Ser-1459, Ser-1461, Ser-1473, Ser-1500, and Ser-1596. Positions Ser-1461–Met-1471 are enriched in acidic residues. Disordered stretches follow at residues Ala-1670–Ser-2137, Ala-2197–Leu-2411, Ala-2430–Pro-2484, Ser-2507–Glu-2586, Glu-2604–His-2852, Asp-2864–Phe-2904, and Gln-2923–Thr-2951. 2 stretches are compositionally biased toward basic and acidic residues: residues Ser-1674–Pro-1683 and Lys-1711–Ser-1733. 3 positions are modified to phosphoserine: Ser-1732, Ser-1733, and Ser-1736. Basic and acidic residues predominate over residues Ile-1766–Gly-1783. Repeat A repeat units lie at residues His-1806–Arg-1817, His-1818–Arg-1829, His-1830–Arg-1841, His-1842–Lys-1853, His-1854–Arg-1865, His-1866–Lys-1877, and His-1878–Arg-1889. The interval His-1806–Arg-1983 is repeat-rich region. Ser-1855 and Ser-1858 each carry phosphoserine. Composition is skewed to basic and acidic residues over residues Lys-1886–Pro-1902 and Arg-1921–Leu-1937. A Repeat A; approximate repeat occupies His-1890–Arg-1900. Repeat A repeat units follow at residues His-1901–Lys-1912 and Arg-1913–Lys-1924. The stretch at His-1925–Lys-1935 is one Repeat A; approximate repeat. Residue Ser-1929 is modified to Phosphoserine. Repeat A repeat units lie at residues Arg-1936 to Lys-1947, His-1948 to Lys-1959, His-1960 to Lys-1971, and Gln-1972 to Arg-1983. 4 stretches are compositionally biased toward basic and acidic residues: residues Lys-1980 to Met-1994, Pro-2003 to Gly-2034, Val-2075 to Pro-2093, and Glu-2102 to Asp-2117. At Ser-2127 the chain carries Phosphoserine. Basic and acidic residues predominate over residues Pro-2128–Ser-2137. Thr-2239 bears the Phosphothreonine mark. Over residues Pro-2240–Pro-2251 the composition is skewed to polar residues. A Phosphoserine modification is found at Ser-2243. Positions Lys-2252–Thr-2282 are enriched in basic and acidic residues. The residue at position 2269 (Thr-2269) is a Phosphothreonine. Position 2275 is a phosphoserine (Ser-2275). Residues Thr-2355–Ser-2376 are compositionally biased toward polar residues. Phosphoserine is present on residues Ser-2405, Ser-2440, Ser-2454, Ser-2516, and Ser-2521. Residues Glu-2523–Glu-2545 are compositionally biased toward polar residues. 2 stretches are compositionally biased toward basic and acidic residues: residues Asn-2576–Glu-2586 and Glu-2604–Glu-2619. Thr-2583 carries the post-translational modification Phosphothreonine. Phosphoserine is present on residues Ser-2679 and Ser-2701. Residues Pro-2696–Pro-2705 show a composition bias toward low complexity. Over residues Glu-2729–Gly-2776 the composition is skewed to basic and acidic residues. A phosphoserine mark is found at Ser-2781 and Ser-2795. A compositionally biased stretch (low complexity) spans Ser-2781 to Ser-2791. A compositionally biased stretch (polar residues) spans Ser-2892–Arg-2903. Ser-2956 bears the Phosphoserine mark. Disordered stretches follow at residues Asn-2987 to Glu-3016, Leu-3069 to Asn-3099, and Gln-3136 to Glu-3462. The span at Gln-2998–Glu-3016 shows a compositional bias: polar residues. Ser-3075 carries the phosphoserine modification. Thr-3078 bears the Phosphothreonine mark. Over residues Thr-3078–Thr-3087 the composition is skewed to low complexity. The segment covering Glu-3090–Asn-3099 has biased composition (polar residues). Over residues Glu-3137–Glu-3149 the composition is skewed to basic and acidic residues. Over residues Leu-3157 to Ser-3169 the composition is skewed to low complexity. The span at Val-3175–Pro-3194 shows a compositional bias: acidic residues. Polar residues-rich tracts occupy residues Ala-3198–Thr-3212 and Leu-3256–Val-3265. Phosphoserine is present on residues Ser-3273, Ser-3276, and Ser-3277. Basic and acidic residues predominate over residues Glu-3335–Pro-3344. Residues Val-3357 to Pro-3374 are compositionally biased toward polar residues. Residues Ser-3390 and Ser-3409 each carry the phosphoserine modification. Residues Ser-3409–Glu-3423 are compositionally biased toward basic and acidic residues. The segment covering Ser-3446–Thr-3460 has biased composition (low complexity). A Phosphoserine modification is found at Ser-3474. One can recognise a Death 2 domain in the interval Ile-3569–Thr-3653. Ser-3735 carries the post-translational modification Phosphoserine. Phosphothreonine occurs at positions 3776, 3797, 3803, and 3814. The segment at Pro-3777–Thr-3858 is disordered. At Ser-3823 the chain carries Phosphoserine. The span at Pro-3832–Pro-3841 shows a compositional bias: basic and acidic residues. Ser-3909 carries the phosphoserine modification.

In terms of assembly, interacts with RHBG and SPTBN1. Colocalizes with Na/K ATPase, Na/Ca exchanger and SPTBN1. Directly interacts with DMD; this interaction is necessary for DMD localization at the sarcolemma. Interacts with DCTN4; this interaction is required for DCTN4 retention at costameres. Identified in complexes that contain VIM, EZR, AHNAK, BFSP1, BFSP2, ANK2, PLEC, PRX and spectrin. Interacts (via death domain) with RABGAP1L (via Rab-GAP TBC domain). Phosphorylated at multiple sites by different protein kinases and each phosphorylation event regulates the protein's structure and function. As to expression, present in plasma membrane of neurons as well as glial cells throughout the brain. Expressed in fetal brain and in temporal cortex of adult brain. Also expressed in the inner segments of rod photoreceptors in retina.

Its subcellular location is the cytoplasm. It localises to the cytoskeleton. The protein localises to the membrane. It is found in the myofibril. The protein resides in the sarcomere. Its subcellular location is the m line. It localises to the apical cell membrane. The protein localises to the cell membrane. It is found in the postsynaptic cell membrane. The protein resides in the early endosome. Its subcellular location is the recycling endosome. It localises to the lysosome. The protein localises to the mitochondrion. It is found in the z line. The protein resides in the sarcolemma. Its subcellular location is the T-tubule. Functionally, plays an essential role in the localization and membrane stabilization of ion transporters and ion channels in several cell types, including cardiomyocytes, as well as in striated muscle cells. In skeletal muscle, required for proper localization of DMD and DCTN4 and for the formation and/or stability of a special subset of microtubules associated with costameres and neuromuscular junctions. In cardiomyocytes, required for coordinate assembly of Na/Ca exchanger, SLC8A1/NCX1, Na/K ATPases ATP1A1 and ATP1A2 and inositol 1,4,5-trisphosphate (InsP3) receptors at sarcoplasmic reticulum/sarcolemma sites. Required for expression and targeting of SPTBN1 in neonatal cardiomyocytes and for the regulation of neonatal cardiomyocyte contraction rate. In the inner segment of rod photoreceptors, required for the coordinated expression of the Na/K ATPase, Na/Ca exchanger and beta-2-spectrin (SPTBN1). Plays a role in endocytosis and intracellular protein transport. Associates with phosphatidylinositol 3-phosphate (PI3P)-positive organelles and binds dynactin to promote long-range motility of cells. Recruits RABGAP1L to (PI3P)-positive early endosomes, where RABGAP1L inactivates RAB22A, and promotes polarized trafficking to the leading edge of the migrating cells. Part of the ANK2/RABGAP1L complex which is required for the polarized recycling of fibronectin receptor ITGA5 ITGB1 to the plasma membrane that enables continuous directional cell migration. The chain is Ankyrin-2 (ANK2) from Homo sapiens (Human).